We begin with the raw amino-acid sequence, 310 residues long: Nucleotide-binding protein BAD_0837 (310 aa).

31 to 38 (GMSGAGRS) is a binding site for ATP. A GTP-binding site is contributed by 82-85 (DVRS).

The protein belongs to the RapZ-like family.

Functionally, displays ATPase and GTPase activities. The polypeptide is Nucleotide-binding protein BAD_0837 (Bifidobacterium adolescentis (strain ATCC 15703 / DSM 20083 / NCTC 11814 / E194a)).